Here is a 184-residue protein sequence, read N- to C-terminus: Endoribonuclease YbeY (184 aa).

Composition is skewed to acidic residues over residues 1 to 11 (MTVEVGADENP) and 19 to 29 (DGAGDESDDED). The interval 1–37 (MTVEVGADENPDFAHDETDGAGDESDDEDAQGRDPEL) is disordered. Zn(2+) is bound by residues His146, His150, and His156.

This sequence belongs to the endoribonuclease YbeY family. It depends on Zn(2+) as a cofactor.

The protein localises to the cytoplasm. Single strand-specific metallo-endoribonuclease involved in late-stage 70S ribosome quality control and in maturation of the 3' terminus of the 16S rRNA. This is Endoribonuclease YbeY from Burkholderia mallei (strain ATCC 23344).